Reading from the N-terminus, the 320-residue chain is Polyketide transferase FFUJ_12241 (320 aa).

The interval 58–298 (RDITCLAWDP…ILKGKGHLDW (241 aa)) is abhydrolase domain.

The protein belongs to the polyketide transferase af380 family.

Polyketide transferase; part of the gene cluster that mediates the biosynthesis of fujikurins A-D, secondary metabolites playing a role during rice infection. The polyketide synthase PKS19 acts with the trans-enoyl reductase FFUJ_12240 and the polyketide transferase FFUJ_12241 to produce fujikurins, however, the biosynthesis pathway has not been identified yet. This is Polyketide transferase FFUJ_12241 from Gibberella fujikuroi (strain CBS 195.34 / IMI 58289 / NRRL A-6831) (Bakanae and foot rot disease fungus).